Here is a 367-residue protein sequence, read N- to C-terminus: (E)-2-epi-beta-caryophyllene synthase (367 aa).

3 residues coordinate Mg(2+): aspartate 93, asparagine 234, and serine 238. The DDXXE motif motif lies at 93 to 97 (DDIAE).

Belongs to the terpene synthase family. Mg(2+) serves as cofactor. The cofactor is Mn(2+).

The catalysed reaction is (2E,6E)-farnesyl diphosphate = (E)-2-epi-beta-caryophyllene + diphosphate. The protein operates within secondary metabolite biosynthesis; terpenoid biosynthesis. Functionally, sesquiterpene synthase converting farnesyl diphosphate to (E)-2-epi-beta-caryophyllene as the major product, and to two other unidentified sesquiterpenes. Has no diterpene synthase activity. This is (E)-2-epi-beta-caryophyllene synthase from Selaginella moellendorffii (Spikemoss).